The primary structure comprises 185 residues: Ribosome-recycling factor (185 aa).

Positions 136 to 155 are disordered; that stretch reads NDDLKKLEKNGDITEDELRA.

It belongs to the RRF family.

It localises to the cytoplasm. Responsible for the release of ribosomes from messenger RNA at the termination of protein biosynthesis. May increase the efficiency of translation by recycling ribosomes from one round of translation to another. This Bacillus velezensis (strain DSM 23117 / BGSC 10A6 / LMG 26770 / FZB42) (Bacillus amyloliquefaciens subsp. plantarum) protein is Ribosome-recycling factor.